We begin with the raw amino-acid sequence, 434 residues long: Iron transporter MagA (434 aa).

The next 10 membrane-spanning stretches (helical) occupy residues 6–26 (PELT…GMMT), 31–51 (PAVV…FGLV), 56–76 (AVAT…GMKL), 86–106 (KTAI…ALLL), 113–133 (SLGL…AVVI), 176–196 (LLPA…LLFW), 269–289 (SVLL…KFIW), 294–314 (TVLT…VTAL), 321–341 (WPSA…SFLL), and 357–377 (KLVV…LFTM).

It belongs to the monovalent cation:proton antiporter 2 (CPA2) transporter (TC 2.A.37) family.

The protein resides in the membrane. Its function is as follows. Iron transporter, which is required for the synthesis of bacterial magnetic particles (BMPs). Probably involved in the transport of iron from the environment into the cytoplasm across the cell membrane, and then from the cytoplasm into the BMP lipid vesicle across the BMP membrane. This Paramagnetospirillum magneticum (strain ATCC 700264 / AMB-1) (Magnetospirillum magneticum) protein is Iron transporter MagA (magA).